A 440-amino-acid chain; its full sequence is Putative F-box/LRR-repeat protein At5g15620 (440 aa).

The F-box domain occupies 1–52 (MDRFSNLPDDVIYHIVSFLSAKEATCLKFVSKNFQNLVTIKRNVVFHHWESF). LRR repeat units lie at residues 4-31 (FSNL…KFVS), 126-153 (LKLG…ILDS), 156-181 (FYAS…VIDR), 194-205 (SSPTLKRLTLRR), 210-235 (PEPE…KYKD), 264-289 (YWLN…SIKV), and 318-343 (EADF…TIEG).

This chain is Putative F-box/LRR-repeat protein At5g15620, found in Arabidopsis thaliana (Mouse-ear cress).